We begin with the raw amino-acid sequence, 91 residues long: MKLVSIFLLVTIGICGYSATALLINRLPVVDKLPVPLDDIIPSFDPLKMLLKTLGISVEHLVTGLKKCVDELGPEASEAVKKLLEALSHLV.

The signal sequence occupies residues 1–21; sequence MKLVSIFLLVTIGICGYSATA.

The protein belongs to the secretoglobin family. UGRP subfamily. Homodimer; disulfide-linked. Monomer. Interacts with APOA1. In terms of tissue distribution, highly expressed in lung where it localizes to epithelial cells of the trachea, bronchus and bronchioles (at protein level). Expressed in club cells of the bronchioles. Also detected in the anterior and posterior lobes of the pituitary gland where it may localize to gonadotropic cells (at protein level). Not detected in other tissues tested.

It localises to the secreted. In terms of biological role, secreted cytokine-like protein. Binds to the scavenger receptor MARCO. Can also bind to pathogens including the Gram-positive bacterium L.monocytogenes, the Gram-negative bacterium P.aeruginosa, and yeast. Strongly inhibits phospholipase A2 (PLA2G1B) activity. Seems to have anti-inflammatory effects in respiratory epithelium. Also has anti-fibrotic activity in lung. May play a role in fetal lung development and maturation. Promotes branching morphogenesis during early stages of lung development. In the pituitary, may inhibit production of follicle-stimulating hormone (FSH) and luteinizing hormone (LH). This is Secretoglobin family 3A member 2 (Scgb3a2) from Mus musculus (Mouse).